Here is a 145-residue protein sequence, read N- to C-terminus: Large ribosomal subunit protein bL17 (145 aa).

Belongs to the bacterial ribosomal protein bL17 family. As to quaternary structure, part of the 50S ribosomal subunit. Contacts protein L32.

The sequence is that of Large ribosomal subunit protein bL17 from Orientia tsutsugamushi (strain Boryong) (Rickettsia tsutsugamushi).